Here is a 444-residue protein sequence, read N- to C-terminus: Phosphoglucosamine mutase (444 aa).

The active-site Phosphoserine intermediate is the Ser-100. Ser-100, Asp-234, Asp-236, and Asp-238 together coordinate Mg(2+). At Ser-100 the chain carries Phosphoserine.

The protein belongs to the phosphohexose mutase family. The cofactor is Mg(2+). Post-translationally, activated by phosphorylation.

The catalysed reaction is alpha-D-glucosamine 1-phosphate = D-glucosamine 6-phosphate. Catalyzes the conversion of glucosamine-6-phosphate to glucosamine-1-phosphate. In Rubrobacter xylanophilus (strain DSM 9941 / JCM 11954 / NBRC 16129 / PRD-1), this protein is Phosphoglucosamine mutase.